The primary structure comprises 325 residues: Germination protease (325 aa).

The propeptide occupies 1-7; that stretch reads MYNVRTD.

This sequence belongs to the peptidase A25 family. In terms of assembly, homotetramer. Autoproteolytically processed. The inactive tetrameric zymogen termed p46 autoprocesses to a smaller form termed p41, which is active only during spore germination.

It carries out the reaction Endopeptidase action with P4 Glu or Asp, P1 preferably Glu &gt; Asp, P1' hydrophobic and P2' Ala.. In terms of biological role, initiates the rapid degradation of small, acid-soluble proteins during spore germination. The polypeptide is Germination protease (Clostridium perfringens (strain ATCC 13124 / DSM 756 / JCM 1290 / NCIMB 6125 / NCTC 8237 / Type A)).